The sequence spans 376 residues: Glucose-1-phosphate adenylyltransferase (376 aa).

Alpha-D-glucose 1-phosphate contacts are provided by residues Tyr101, Gly166, 181-182 (EK), and Ser192.

This sequence belongs to the bacterial/plant glucose-1-phosphate adenylyltransferase family. Homotetramer.

It catalyses the reaction alpha-D-glucose 1-phosphate + ATP + H(+) = ADP-alpha-D-glucose + diphosphate. Its pathway is glycan biosynthesis; glycogen biosynthesis. Its function is as follows. Involved in the biosynthesis of ADP-glucose, a building block required for the elongation reactions to produce glycogen. Catalyzes the reaction between ATP and alpha-D-glucose 1-phosphate (G1P) to produce pyrophosphate and ADP-Glc. The protein is Glucose-1-phosphate adenylyltransferase of Bacillus cereus (strain ATCC 14579 / DSM 31 / CCUG 7414 / JCM 2152 / NBRC 15305 / NCIMB 9373 / NCTC 2599 / NRRL B-3711).